A 308-amino-acid chain; its full sequence is Ribonuclease HIII (308 aa).

Residues 91 to 308 (KNVIGSDEVG…TEKALKMVKK (218 aa)) enclose the RNase H type-2 domain. A divalent metal cation-binding residues include D97, E98, and D202.

The protein belongs to the RNase HII family. RnhC subfamily. The cofactor is Mn(2+). It depends on Mg(2+) as a cofactor.

The protein localises to the cytoplasm. The catalysed reaction is Endonucleolytic cleavage to 5'-phosphomonoester.. Endonuclease that specifically degrades the RNA of RNA-DNA hybrids. In Listeria monocytogenes serotype 4b (strain CLIP80459), this protein is Ribonuclease HIII.